We begin with the raw amino-acid sequence, 218 residues long: Cytidylate kinase (218 aa).

Residue 10-18 (GPAAAGKST) coordinates ATP.

It belongs to the cytidylate kinase family. Type 1 subfamily.

It localises to the cytoplasm. It carries out the reaction CMP + ATP = CDP + ADP. The catalysed reaction is dCMP + ATP = dCDP + ADP. The sequence is that of Cytidylate kinase from Staphylococcus haemolyticus (strain JCSC1435).